The chain runs to 958 residues: N-terminal acetyltransferase B complex subunit NAA25 homolog (958 aa).

TPR repeat units follow at residues alanine 7 to threonine 42, glutamate 78 to glutamate 111, and phenylalanine 320 to tyrosine 353.

This sequence belongs to the MDM20/NAA25 family. Component of the N-terminal acetyltransferase B (NatB) complex. Interacts with acer-1. Expressed in germline and somatic cells.

It is found in the cytoplasm. It localises to the nucleus. The protein resides in the chromosome. Functionally, non-catalytic subunit of the NatB complex which catalyzes acetylation of the N-terminal methionine residues of proteins beginning with Met-Asp or Met-Glu. Required for chromosome organization and arrangement; specifically for assembly of the central region components of the synaptonemal complex onto chromosomes during meiosis and for DNA double stranded break formation and repair. Acts downstream of xnd-1 to regulate levels of histone acetylation in germ and somatic cell nuclei by controlling acetyl-CoA production through antagonizing the acetyl-CoA hydrolase activity of acer-1. The polypeptide is N-terminal acetyltransferase B complex subunit NAA25 homolog (Caenorhabditis elegans).